The primary structure comprises 404 residues: Cysteine desulfurase IscS (404 aa).

Residues 73 to 74 (AT), N153, Q181, and 201 to 203 (SAH) each bind pyridoxal 5'-phosphate. An N6-(pyridoxal phosphate)lysine modification is found at K204. Residue T241 coordinates pyridoxal 5'-phosphate. C327 acts as the Cysteine persulfide intermediate in catalysis. A [2Fe-2S] cluster-binding site is contributed by C327.

Belongs to the class-V pyridoxal-phosphate-dependent aminotransferase family. NifS/IscS subfamily. As to quaternary structure, homodimer. Forms a heterotetramer with IscU, interacts with other sulfur acceptors. The cofactor is pyridoxal 5'-phosphate.

The protein resides in the cytoplasm. It catalyses the reaction (sulfur carrier)-H + L-cysteine = (sulfur carrier)-SH + L-alanine. It functions in the pathway cofactor biosynthesis; iron-sulfur cluster biosynthesis. Master enzyme that delivers sulfur to a number of partners involved in Fe-S cluster assembly, tRNA modification or cofactor biosynthesis. Catalyzes the removal of elemental sulfur atoms from cysteine to produce alanine. Functions as a sulfur delivery protein for Fe-S cluster synthesis onto IscU, an Fe-S scaffold assembly protein, as well as other S acceptor proteins. This is Cysteine desulfurase IscS from Anaeromyxobacter dehalogenans (strain 2CP-C).